Here is a 202-residue protein sequence, read N- to C-terminus: Peptide deformylase (202 aa).

The interval 1–24 is disordered; the sequence is MAGSFAQLAKNAEKKKPSISVSKE. Residues Cys-121 and His-163 each contribute to the Fe cation site. Residue Glu-164 is part of the active site. Residue His-167 coordinates Fe cation.

This sequence belongs to the polypeptide deformylase family. Requires Fe(2+) as cofactor.

It catalyses the reaction N-terminal N-formyl-L-methionyl-[peptide] + H2O = N-terminal L-methionyl-[peptide] + formate. Its function is as follows. Removes the formyl group from the N-terminal Met of newly synthesized proteins. Requires at least a dipeptide for an efficient rate of reaction. N-terminal L-methionine is a prerequisite for activity but the enzyme has broad specificity at other positions. This Prochlorococcus marinus (strain NATL1A) protein is Peptide deformylase.